A 346-amino-acid polypeptide reads, in one-letter code: uncharacterized protein (346 aa).

This sequence belongs to the Gfo/Idh/MocA family.

This is an uncharacterized protein from Escherichia coli (strain K12).